We begin with the raw amino-acid sequence, 259 residues long: MVLIRVLANLLILQLSYAQKSSELVIGGDECNINEHRLLAIVYTNSSQCAGTLINQEWVLTAAHCDGENMDIYLGVHNESVQYDDEEGRVAAEKFFCLSSRNYTKWDKDIMLIRLNIPVRNSTHIAPLSLPSSPPSVGSVCRVMGWGTITSPNETYPDVPHCANINLFDYEVCLAAYPEFGLPATSRTLCAGIQQGGKDTCGSDSGGSLICNGQFQGIVSWGDNPCAQPHKPALYTKVLDDTEWIQSIIAGNTAVTCPP.

An N-terminal signal peptide occupies residues 1–18 (MVLIRVLANLLILQLSYA). The propeptide occupies 19-259 (QKSSELVIGG…AGNTAVTCPP (241 aa)). The Peptidase S1 domain maps to 25–250 (VIGGDECNIN…DTEWIQSIIA (226 aa)). 5 disulfide bridges follow: cysteine 31–cysteine 162, cysteine 49–cysteine 65, cysteine 141–cysteine 211, cysteine 173–cysteine 190, and cysteine 201–cysteine 226. Histidine 64 (charge relay system) is an active-site residue. Asparagine 102 is a glycosylation site (N-linked (GlcNAc...) asparagine). The active-site Charge relay system is aspartate 109. Serine 205 (charge relay system) is an active-site residue.

It belongs to the peptidase S1 family. Snake venom subfamily. As to quaternary structure, monomer. As to expression, expressed by the venom gland.

The protein resides in the secreted. Thrombin-like snake venom serine protease. Displays a specificity similar to trypsin. Releases only fibrinopeptide A in the conversion of fibrinogen to fibrin. Shows coagulant, esterase and amidase activities. Reversibly increases the permeability of the blood brain barrier (BBB) in mice. Induces the barrel rotation syndrome in mice, which is manifested by gyroxin-like, rapid rolling motions. This syndrome may be due to its effect on BBB permeability, and certainly also to other actions affecting endogenous substrates present in the endothelium, nervous tissues or blood. In Crotalus durissus terrificus (South American rattlesnake), this protein is Thrombin-like enzyme gyroxin B1.7.